Reading from the N-terminus, the 283-residue chain is Arsenite methyltransferase (283 aa).

Belongs to the methyltransferase superfamily. Arsenite methyltransferase family.

It carries out the reaction arsenic triglutathione + [thioredoxin]-dithiol + S-adenosyl-L-methionine + 2 H2O = methylarsonous acid + [thioredoxin]-disulfide + 3 glutathione + S-adenosyl-L-homocysteine + H(+). It catalyses the reaction arsenic triglutathione + 2 [thioredoxin]-dithiol + 2 S-adenosyl-L-methionine + H2O = dimethylarsinous acid + 2 [thioredoxin]-disulfide + 3 glutathione + 2 S-adenosyl-L-homocysteine + 2 H(+). The enzyme catalyses arsenic triglutathione + 3 [thioredoxin]-dithiol + 3 S-adenosyl-L-methionine = trimethylarsine + 3 [thioredoxin]-disulfide + 3 glutathione + 3 S-adenosyl-L-homocysteine + 3 H(+). Functionally, catalyzes the transfer of a methyl group from AdoMet to arsenite, producing methylated arsenicals. Involved in the conversion of As(III) to a number of di- and trimethylated species, with trimethylarsine as the end product. Reduces the arsenic toxicity in the cell and may contribute to the global arsenic cycling. The polypeptide is Arsenite methyltransferase (Rhodopseudomonas palustris (strain ATCC BAA-98 / CGA009)).